We begin with the raw amino-acid sequence, 318 residues long: 4-diphosphocytidyl-2-C-methyl-D-erythritol kinase (318 aa).

The active site involves Lys25. Residue 110–120 (PVAGGMAGGSA) participates in ATP binding. Asp152 is an active-site residue.

Belongs to the GHMP kinase family. IspE subfamily.

It catalyses the reaction 4-CDP-2-C-methyl-D-erythritol + ATP = 4-CDP-2-C-methyl-D-erythritol 2-phosphate + ADP + H(+). Its pathway is isoprenoid biosynthesis; isopentenyl diphosphate biosynthesis via DXP pathway; isopentenyl diphosphate from 1-deoxy-D-xylulose 5-phosphate: step 3/6. Catalyzes the phosphorylation of the position 2 hydroxy group of 4-diphosphocytidyl-2C-methyl-D-erythritol. This chain is 4-diphosphocytidyl-2-C-methyl-D-erythritol kinase, found in Mycobacterium tuberculosis (strain ATCC 25177 / H37Ra).